A 314-amino-acid polypeptide reads, in one-letter code: DNA-directed RNA polymerase subunit alpha (314 aa).

Positions 1 to 228 (MIEIEKPNIE…EHLNIFVGLT (228 aa)) are alpha N-terminal domain (alpha-NTD). Residues 245–314 (KEKVLEMTIE…ELGLGLRNEE (70 aa)) are alpha C-terminal domain (alpha-CTD).

It belongs to the RNA polymerase alpha chain family. As to quaternary structure, homodimer. The RNAP catalytic core consists of 2 alpha, 1 beta, 1 beta' and 1 omega subunit. When a sigma factor is associated with the core the holoenzyme is formed, which can initiate transcription.

The enzyme catalyses RNA(n) + a ribonucleoside 5'-triphosphate = RNA(n+1) + diphosphate. Functionally, DNA-dependent RNA polymerase catalyzes the transcription of DNA into RNA using the four ribonucleoside triphosphates as substrates. The polypeptide is DNA-directed RNA polymerase subunit alpha (Shouchella clausii (strain KSM-K16) (Alkalihalobacillus clausii)).